A 188-amino-acid polypeptide reads, in one-letter code: Pyridoxal 5'-phosphate synthase subunit PdxT (188 aa).

Residue 46–48 coordinates L-glutamine; sequence GES. Residue cysteine 78 is the Nucleophile of the active site. Residues arginine 105 and 134–135 contribute to the L-glutamine site; that span reads IR. Active-site charge relay system residues include histidine 170 and glutamate 172.

This sequence belongs to the glutaminase PdxT/SNO family. In the presence of PdxS, forms a dodecamer of heterodimers. Only shows activity in the heterodimer.

It catalyses the reaction aldehydo-D-ribose 5-phosphate + D-glyceraldehyde 3-phosphate + L-glutamine = pyridoxal 5'-phosphate + L-glutamate + phosphate + 3 H2O + H(+). The catalysed reaction is L-glutamine + H2O = L-glutamate + NH4(+). It participates in cofactor biosynthesis; pyridoxal 5'-phosphate biosynthesis. In terms of biological role, catalyzes the hydrolysis of glutamine to glutamate and ammonia as part of the biosynthesis of pyridoxal 5'-phosphate. The resulting ammonia molecule is channeled to the active site of PdxS. The chain is Pyridoxal 5'-phosphate synthase subunit PdxT from Thermotoga neapolitana (strain ATCC 49049 / DSM 4359 / NBRC 107923 / NS-E).